The chain runs to 424 residues: Serine--tRNA ligase (424 aa).

L-serine is bound at residue Thr232 to Glu234. Arg263–Glu265 is an ATP binding site. Glu286 serves as a coordination point for L-serine. Glu350–Ser353 provides a ligand contact to ATP. Ser386 is an L-serine binding site.

This sequence belongs to the class-II aminoacyl-tRNA synthetase family. Type-1 seryl-tRNA synthetase subfamily. Homodimer. The tRNA molecule binds across the dimer.

The protein resides in the cytoplasm. The enzyme catalyses tRNA(Ser) + L-serine + ATP = L-seryl-tRNA(Ser) + AMP + diphosphate + H(+). It catalyses the reaction tRNA(Sec) + L-serine + ATP = L-seryl-tRNA(Sec) + AMP + diphosphate + H(+). It participates in aminoacyl-tRNA biosynthesis; selenocysteinyl-tRNA(Sec) biosynthesis; L-seryl-tRNA(Sec) from L-serine and tRNA(Sec): step 1/1. Catalyzes the attachment of serine to tRNA(Ser). Is also able to aminoacylate tRNA(Sec) with serine, to form the misacylated tRNA L-seryl-tRNA(Sec), which will be further converted into selenocysteinyl-tRNA(Sec). The protein is Serine--tRNA ligase of Aster yellows witches'-broom phytoplasma (strain AYWB).